Consider the following 140-residue polypeptide: ATP synthase epsilon chain (140 aa).

The protein belongs to the ATPase epsilon chain family. In terms of assembly, F-type ATPases have 2 components, CF(1) - the catalytic core - and CF(0) - the membrane proton channel. CF(1) has five subunits: alpha(3), beta(3), gamma(1), delta(1), epsilon(1). CF(0) has three main subunits: a, b and c.

It is found in the cell inner membrane. Its function is as follows. Produces ATP from ADP in the presence of a proton gradient across the membrane. This chain is ATP synthase epsilon chain, found in Janthinobacterium sp. (strain Marseille) (Minibacterium massiliensis).